A 402-amino-acid polypeptide reads, in one-letter code: Deacetylase Oant_2987 (402 aa).

6 residues coordinate Zn(2+): His-70, His-72, Lys-168, His-201, His-224, and Asp-284. Lys-168 is subject to N6-carboxylysine.

Belongs to the metallo-dependent hydrolases superfamily. Atu3266/EF_0837 deacetylase family. Requires Zn(2+) as cofactor.

Functionally, esterase that catalyzes the deacetylation of acetyl-(R)-mandelate (in vitro). Can also hydrolyze acetyl glycolate, but with lower efficiency. Has very low N-acetyl-D-amino acid deacetylase activity with N-acetyl-D-serine and N-acetyl-D-threonine (in vitro). Theoretical substrate docking studies suggest that other N-acetylated amino acids may optimally occupy the active site and may in fact be the physiological substrates. This Brucella anthropi (strain ATCC 49188 / DSM 6882 / CCUG 24695 / JCM 21032 / LMG 3331 / NBRC 15819 / NCTC 12168 / Alc 37) (Ochrobactrum anthropi) protein is Deacetylase Oant_2987.